Reading from the N-terminus, the 302-residue chain is Recombination-associated protein RdgC (302 aa).

This sequence belongs to the RdgC family.

It localises to the cytoplasm. It is found in the nucleoid. In terms of biological role, may be involved in recombination. The protein is Recombination-associated protein RdgC of Psychromonas ingrahamii (strain DSM 17664 / CCUG 51855 / 37).